The primary structure comprises 138 residues: MSSKVGGGKGGKSKTSSEAKVLTTRSSKAGLQFPVGRIHRFLRNKNANNVRIGAKAAVYVASIMEYLTAEVLELAGNAAKDLRVKRITPRHLQLAIRGDEELDLLIRATIAGGGVLPHIHKSLVAKNAPLKKPKALDA.

Residues 1–10 (MSSKVGGGKG) are compositionally biased toward gly residues. Residues 1–21 (MSSKVGGGKGGKSKTSSEAKV) form a disordered region. K4 and K9 each carry N6-acetyllysine.

This sequence belongs to the histone H2A family. As to quaternary structure, the nucleosome is a histone octamer containing two molecules each of H2A, H2B, H3 and H4 assembled in one H3-H4 heterotetramer and two H2A-H2B heterodimers. The octamer wraps approximately 147 bp of DNA. H2A or its variant H2A.Z forms a heterodimer with H2B. H2A.Z associates with the VPS72/SWC2 subunit of the SWR1 chromatin remodeling complex. Also interacts with RBP1/DNA-directed RNA polymerase II largest subunit. Acetylated once deposited into chromatin.

The protein resides in the nucleus. It localises to the chromosome. In terms of biological role, variant histone H2A which can replace H2A in some nucleosomes. Nucleosomes wrap and compact DNA into chromatin, limiting DNA accessibility to the cellular machineries which require DNA as a template. Histones thereby play a central role in transcription regulation, DNA repair, DNA replication and chromosomal stability. DNA accessibility is regulated via a complex set of post-translational modifications of histones, also called histone code, and nucleosome remodeling. This variant is enriched at promoters, it may keep them in a repressed state until the appropriate activation signal is received. Near telomeres, it may counteract gene silencing caused by the spread of heterochromatin proteins. Required for the RNA polymerase II and SPT15/TBP recruitment to the target genes. Involved in chromosome stability. This chain is Histone H2A.Z (HTZ1), found in Cryptococcus neoformans var. neoformans serotype D (strain B-3501A) (Filobasidiella neoformans).